Here is a 658-residue protein sequence, read N- to C-terminus: Threonine--tRNA ligase (658 aa).

The region spanning 1–61 (MSDVRVIIQR…RDGESVEPVE (61 aa)) is the TGS domain. Residues 259 to 554 (DHRKLGNELD…LLEHYAGAFP (296 aa)) form a catalytic region. Zn(2+)-binding residues include Cys-353, His-404, and His-531.

It belongs to the class-II aminoacyl-tRNA synthetase family. As to quaternary structure, homodimer. Zn(2+) serves as cofactor.

The protein localises to the cytoplasm. The catalysed reaction is tRNA(Thr) + L-threonine + ATP = L-threonyl-tRNA(Thr) + AMP + diphosphate + H(+). Catalyzes the attachment of threonine to tRNA(Thr) in a two-step reaction: L-threonine is first activated by ATP to form Thr-AMP and then transferred to the acceptor end of tRNA(Thr). Also edits incorrectly charged L-seryl-tRNA(Thr). The sequence is that of Threonine--tRNA ligase from Streptomyces griseus subsp. griseus (strain JCM 4626 / CBS 651.72 / NBRC 13350 / KCC S-0626 / ISP 5235).